Reading from the N-terminus, the 282-residue chain is Large ribosomal subunit protein uL2 (282 aa).

Disordered regions lie at residues K26–G55 and P218–S266. Residues L34 to R43 show a composition bias toward polar residues. Residues T254–S266 show a composition bias toward basic residues.

Belongs to the universal ribosomal protein uL2 family. Part of the 50S ribosomal subunit. Forms a bridge to the 30S subunit in the 70S ribosome.

Its function is as follows. One of the primary rRNA binding proteins. Required for association of the 30S and 50S subunits to form the 70S ribosome, for tRNA binding and peptide bond formation. It has been suggested to have peptidyltransferase activity; this is somewhat controversial. Makes several contacts with the 16S rRNA in the 70S ribosome. The sequence is that of Large ribosomal subunit protein uL2 from Pediococcus pentosaceus (strain ATCC 25745 / CCUG 21536 / LMG 10740 / 183-1w).